A 252-amino-acid polypeptide reads, in one-letter code: Neurovirulence factor ICP34.5 (252 aa).

The span at 1–15 (MARRRRRHRGPRRPR) shows a compositional bias: basic residues. The interval 1–17 (MARRRRRHRGPRRPRPP) is required for nucleolar localization. Disordered regions lie at residues 1–129 (MARR…PFRL) and 150–179 (RRAG…PATP). Positions 25 to 36 (TAQSQVTSTPNS) are enriched in polar residues. Pro residues predominate over residues 46-59 (AAPPPPPAGGPPPS). Residues 74 to 84 (ASDDDDDDDWP) are compositionally biased toward acidic residues. Pro residues-rich tracts occupy residues 85-94 (DSPPPEPAPE) and 120-129 (SHPPSRPFRL). Positions 129 to 138 (LPPRLALRLR) match the Nuclear export signal motif. 6 tandem repeats follow at residues 162 to 164 (ATP), 165 to 167 (ATP), 168 to 170 (ATP), 171 to 173 (ATP), 174 to 176 (ATP), and 177 to 179 (ATP). The segment at 162-179 (ATPATPATPATPATPATP) is 6 X 3 AA tandem repeats of A-T-P. A compositionally biased stretch (low complexity) spans 165-179 (ATPATPATPATPATP). Residues 179-192 (PARVRFSPHVRVRH) are binding to PP1CA. The interval 179–192 (PARVRFSPHVRVRH) is interaction with host PPP1CA. The tract at residues 194 to 252 (VVWASAARLARRGSWARERADRARFRRRVAEAEAVIGPCLGPKARARALARGAGPANSV) is important for interferon resistance. The short motif at 204-222 (RRGSWARERADRARFRRRV) is the Bipartite nuclear localization signal element. Residues 222 to 237 (VAEAEAVIGPCLGPKA) form an interaction with host EIF2S1/EIF-2ALPHA region.

Belongs to the PPP1R15 family. As to quaternary structure, interacts with host PPP1CA to form a high-molecular-weight complex that dephosphorylates EIF2S1/eIF-2alpha. Interacts with host EIF2S1/eIF-2alpha; this interaction is crucial for the specific dephosphorylation of EIF2S1/eIF-2alpha by PPP1CA. Binds to proliferating cell nuclear antigen (PCNA), which may release host cells from growth arrest and facilitate viral replication. Interacts (via N-terminus) with host C1QBP and PRKCA. Interacts with protein UL31. Interacts with host TBK1. Interacts with host STING/TMEM173; this interaction inhibits the intracellular DNA sensing pathway. Interacts with host BECN1; this interaction modulates host autophagy.

Its subcellular location is the host cytoplasm. The protein localises to the host nucleus. It is found in the host nucleolus. It localises to the virion. Its function is as follows. Inhibits the establishment of the immune response and of the integrated stress response (ISR) in the infected cell. Plays essential roles in viral nuclear egress to mediate capsid transit across the nuclear membrane. Facilitates nuclear egress cooperatively with host C1QBP and protein kinase C/PKC to induce lamin A/C phosphorylation and subsequent reorganization. In turn, lamina disassembles and nuclear egress occurs. Recruits the serine/threonine protein phosphatase PPP1CA/PP1-alpha to dephosphorylate the translation initiation factor EIF2S1/eIF-2alpha, thereby couteracting the host shutoff of protein synthesis involving double-stranded RNA-dependent protein kinase EIF2AK2/PKR. In turn, controls host IRF3 activation and subsequently inhibits host interferon response. Controls the DNA sensing pathway by interacting with and inhibiting host STING/TMEM173. Also down-modulates the host MHC class II proteins cell surface expression. Acts as a neurovirulence factor that has a profound effect on the growth of the virus in central nervous system tissue, by interacting with host BECN1 and thereby antagonizing the host autophagy response. The polypeptide is Neurovirulence factor ICP34.5 (RL1) (Human herpesvirus 1 (strain CVG-2) (HHV-1)).